The chain runs to 225 residues: MPDIKYLKKLALIGAINKIIKVSSSEFQKHTGASSKTTARKLKQLEDERLIERKIVPGGQLIKMTDKGIEVLKNEYVDYSRIFSPDLDILELEGKVLKGLGEGQYYVNIPGYRKQFEEKLHFVPFPGTLNVQLSESSSSLRNLLLETPAIRVEGFNDGERTFGGGKCYPVVVGSIEAAVVVPERTHYPSDLIEIIAPIKLRDALKLKDGDRVVVQLKKQGTENQK.

Residues 1-89 (MPDIKYLKKL…SRIFSPDLDI (89 aa)) are unknown. The riboflavin kinase stretch occupies residues 90–225 (LELEGKVLKG…LKKQGTENQK (136 aa)). Residue 99–104 (GLGEGQ) coordinates CDP. The Mg(2+) site is built by threonine 128 and asparagine 130. Threonine 185 and glutamate 193 together coordinate FMN. 198-201 (IKLR) provides a ligand contact to CDP.

It belongs to the archaeal riboflavin kinase family. Mg(2+) serves as cofactor.

It carries out the reaction riboflavin + CTP = CDP + FMN + H(+). Its pathway is cofactor biosynthesis; FMN biosynthesis; FMN from riboflavin (CTP route): step 1/1. Functionally, catalyzes the CTP-dependent phosphorylation of riboflavin (vitamin B2) to form flavin mononucleotide (FMN). This is Riboflavin kinase (ribK) from Methanosarcina barkeri (strain Fusaro / DSM 804).